The primary structure comprises 207 residues: Hepatic lectin (207 aa).

Methionine 1 carries the N-acetylmethionine modification. The Cytoplasmic segment spans residues 1 to 23 (MDEERLSDNVRLYKGGSIRQGLR). Residues 24–48 (SFAAVYVLLALSFLLLTLLSSVSLA) form a helical; Signal-anchor for type II membrane protein membrane-spanning segment. Residues 49 to 207 (RIAALSSKLS…YYVCEKPLPK (159 aa)) lie on the Extracellular side of the membrane. N-linked (GlcNAc...) asparagine glycosylation is present at asparagine 67. A C-type lectin domain is found at 77–203 (PCGAQSRQWE…TYECYYVCEK (127 aa)). 3 disulfides stabilise this stretch: cysteine 78/cysteine 92, cysteine 109/cysteine 201, and cysteine 179/cysteine 193.

In terms of processing, some or all of the cysteines are involved in disulfide bonds.

It localises to the membrane. Its function is as follows. Hepatic lectin is a membrane receptor protein that recognizes and binds exposed N-acetylglucosamine moieties of plasma glycoproteins, thus mediating their clearance (from the circulation) and endocytosis. The sequence is that of Hepatic lectin from Gallus gallus (Chicken).